Here is a 617-residue protein sequence, read N- to C-terminus: Transmembrane protein 232 (617 aa).

A helical membrane pass occupies residues 129–149 (LVKIGYLIFLRLFVFFLHGHL). The stretch at 567–604 (LKQIEAVCEAQNRKDEEEKEKIRFQEIMKQRERKLNKQ) forms a coiled coil. The interval 598 to 617 (ERKLNKQTKPYEITPSEKKE) is disordered.

The protein resides in the membrane. Its function is as follows. Plays a critical role for male fertility and sperm motility by regulating sperm cytoplasm removal and maintaining axoneme integrity. The sequence is that of Transmembrane protein 232 (Tmem232) from Rattus norvegicus (Rat).